Consider the following 211-residue polypeptide: MTPWLGLVVLLSCWSLGHWGAEACTCSPSHPQDAFCNSDIVIRAKVVGKKLVKEGPFGTLVYTIKQMKMYRGFSKMPHVQYIHTEASESLCGLKLEVNKYQYLLTGRVYEGKMYTGLCNFVERWDHLTLSQRKGLNYRYHLGCNCKIKSCYYLPCFVTSKNECLWTDMLSNFGYPGYQSKHYACIRQKGGYCSWYRGWAPPDKSISNATDP.

An N-terminal signal peptide occupies residues 1 to 23 (MTPWLGLVVLLSCWSLGHWGAEA). Cysteine 24 contributes to the Zn(2+) binding site. 2 involved in metalloproteinase-binding regions span residues 24 to 27 (CTCS) and 88 to 89 (ES). 6 disulfides stabilise this stretch: cysteine 24-cysteine 91, cysteine 26-cysteine 118, cysteine 36-cysteine 143, cysteine 145-cysteine 192, cysteine 150-cysteine 155, and cysteine 163-cysteine 184. The 120-residue stretch at 24-143 (CTCSPSHPQD…GLNYRYHLGC (120 aa)) folds into the NTR domain. Positions 105 to 188 (TGRVYEGKMY…SKHYACIRQK (84 aa)) are mediates interaction with EFEMP1.

It belongs to the protease inhibitor I35 (TIMP) family. As to quaternary structure, interacts with EFEMP1. Interacts with KDR. As to expression, highest levels are found in kidney, lung and brain followed by ovary and uterus. Low levels are found in bone.

It is found in the secreted. The protein localises to the extracellular space. The protein resides in the extracellular matrix. Its function is as follows. Mediates a variety of processes including matrix regulation and turnover, inflammation, and angiogenesis, through reversible inhibition of zinc protease superfamily enzymes, primarily matrix metalloproteinases (MMPs). Regulates extracellular matrix (ECM) remodeling through inhibition of matrix metalloproteinases (MMP) including MMP-1, MMP-2, MMP-3, MMP-7, MMP-9, MMP-13, MMP-14 and MMP-15. Additionally, modulates the processing of amyloid precursor protein (APP) and apolipoprotein E receptor ApoER2 by inhibiting two alpha-secretases ADAM10 and ADAM17. Functions as a tumor suppressor and a potent inhibitor of angiogenesis. Exerts its anti-angiogenic effect by directly interacting with vascular endothelial growth factor (VEGF) receptor-2/KDR, preventing its binding to the VEGFA ligand. Selectively induces apoptosis in angiogenic endothelial cells through a caspase-independent cell death pathway. Mechanistically, inhibits matrix-induced focal adhesion kinase PTK2 tyrosine phosphorylation and association with paxillin/PXN and disrupts the incorporation of ITGB3, PTK2 and PXN into focal adhesion contacts on the matrix. The protein is Metalloproteinase inhibitor 3 (Timp3) of Mus musculus (Mouse).